Consider the following 100-residue polypeptide: Integration host factor subunit alpha (100 aa).

Belongs to the bacterial histone-like protein family. In terms of assembly, heterodimer of an alpha and a beta chain.

In terms of biological role, this protein is one of the two subunits of integration host factor, a specific DNA-binding protein that functions in genetic recombination as well as in transcriptional and translational control. This Phenylobacterium zucineum (strain HLK1) protein is Integration host factor subunit alpha.